Reading from the N-terminus, the 445-residue chain is Phosphoglucosamine mutase (445 aa).

Residue Ser-102 is the Phosphoserine intermediate of the active site. Mg(2+)-binding residues include Ser-102, Asp-241, Asp-243, and Asp-245. At Ser-102 the chain carries Phosphoserine.

The protein belongs to the phosphohexose mutase family. Mg(2+) is required as a cofactor. In terms of processing, activated by phosphorylation.

It carries out the reaction alpha-D-glucosamine 1-phosphate = D-glucosamine 6-phosphate. Its function is as follows. Catalyzes the conversion of glucosamine-6-phosphate to glucosamine-1-phosphate. The sequence is that of Phosphoglucosamine mutase from Shewanella baltica (strain OS155 / ATCC BAA-1091).